The chain runs to 149 residues: Transcriptional repressor NrdR (149 aa).

A zinc finger spans residues 3-34; sequence CPFCNADDTKVIDSRLVADGHQVRRRRECLVC. Residues 49 to 139 enclose the ATP-cone domain; that stretch reads PRVIKSNGVR…VYRSFEDIRE (91 aa).

The protein belongs to the NrdR family. Zn(2+) serves as cofactor.

Negatively regulates transcription of bacterial ribonucleotide reductase nrd genes and operons by binding to NrdR-boxes. The polypeptide is Transcriptional repressor NrdR (Tolumonas auensis (strain DSM 9187 / NBRC 110442 / TA 4)).